The following is a 24-amino-acid chain: Chlorate reductase subunit beta (24 aa).

In terms of assembly, heterotrimer of alpha, beta and gamma subunits. The cofactor is [3Fe-4S] cluster. Requires [4Fe-4S] cluster as cofactor.

It is found in the cytoplasm. In terms of biological role, electron transfer subunit of the chlorate reductase. This Stutzerimonas chloritidismutans (Pseudomonas chloritidismutans) protein is Chlorate reductase subunit beta.